We begin with the raw amino-acid sequence, 273 residues long: Putative pyruvate, phosphate dikinase regulatory protein (273 aa).

Position 149–156 (149–156) interacts with ADP; it reads GPSRTSKT.

It belongs to the pyruvate, phosphate/water dikinase regulatory protein family. PDRP subfamily.

It carries out the reaction N(tele)-phospho-L-histidyl/L-threonyl-[pyruvate, phosphate dikinase] + ADP = N(tele)-phospho-L-histidyl/O-phospho-L-threonyl-[pyruvate, phosphate dikinase] + AMP + H(+). The catalysed reaction is N(tele)-phospho-L-histidyl/O-phospho-L-threonyl-[pyruvate, phosphate dikinase] + phosphate + H(+) = N(tele)-phospho-L-histidyl/L-threonyl-[pyruvate, phosphate dikinase] + diphosphate. Functionally, bifunctional serine/threonine kinase and phosphorylase involved in the regulation of the pyruvate, phosphate dikinase (PPDK) by catalyzing its phosphorylation/dephosphorylation. This is Putative pyruvate, phosphate dikinase regulatory protein from Rickettsia conorii (strain ATCC VR-613 / Malish 7).